The sequence spans 966 residues: Regulator of telomere elongation helicase 1 homolog (966 aa).

One can recognise a Helicase ATP-binding domain in the interval 7-284 (AGIPVHFPFE…QDMAGDEPKD (278 aa)). Position 42–49 (42–49 (SPTGTGKT)) interacts with ATP. Residues C146, C164, C173, and C209 each contribute to the [4Fe-4S] cluster site. The DEAH box motif lies at 233–236 (DEAH). The interval 844–864 (VKIHKRERSSPTAPESTSQVS) is disordered. Residues 853 to 863 (SPTAPESTSQV) are compositionally biased toward polar residues. T855 bears the Phosphothreonine mark.

Belongs to the helicase family. RAD3/XPD subfamily.

It is found in the nucleus. It catalyses the reaction ATP + H2O = ADP + phosphate + H(+). In terms of biological role, a probable ATP-dependent DNA helicase implicated in DNA repair and the maintenance of genomic stability. Acts as an anti-recombinase to counteract toxic recombination and limit crossover during meiosis. Regulates meiotic recombination and crossover homeostasis by physically dissociating strand invasion events and thereby promotes noncrossover repair by meiotic synthesis dependent strand annealing (SDSA) as well as disassembly of D loop recombination intermediates. In Drosophila sechellia (Fruit fly), this protein is Regulator of telomere elongation helicase 1 homolog.